The sequence spans 158 residues: pH 6 antigen (158 aa).

The first 26 residues, 1-26 (MKMKCFAKNALAVTTLMIAACGMANA), serve as a signal peptide directing secretion.

In terms of assembly, forms a homomer composed of subunits assembled in a large structure.

The protein localises to the fimbrium. Its function is as follows. Fibrillar structure, part of fimbriae, necessary for full virulence. This is pH 6 antigen (psaA) from Yersinia pestis.